We begin with the raw amino-acid sequence, 196 residues long: Glycerol-3-phosphate acyltransferase 2 (196 aa).

Transmembrane regions (helical) follow at residues 2-22 (GWWLFPILGYFIGSIPFSYLI), 52-72 (VGGICLLLDALKGFFPVFITI), 80-100 (IVSLTAIATVLGHDFPIFMKF), 112-132 (IIFCLSWPTGLVFTLTWLVIV), and 137-156 (YASLGSLVALYVSALLGYLL).

Belongs to the PlsY family. In terms of assembly, probably interacts with PlsX.

Its subcellular location is the cell inner membrane. The enzyme catalyses an acyl phosphate + sn-glycerol 3-phosphate = a 1-acyl-sn-glycero-3-phosphate + phosphate. It functions in the pathway lipid metabolism; phospholipid metabolism. Functionally, catalyzes the transfer of an acyl group from acyl-phosphate (acyl-PO(4)) to glycerol-3-phosphate (G3P) to form lysophosphatidic acid (LPA). This enzyme utilizes acyl-phosphate as fatty acyl donor, but not acyl-CoA or acyl-ACP. The chain is Glycerol-3-phosphate acyltransferase 2 from Thermotoga maritima (strain ATCC 43589 / DSM 3109 / JCM 10099 / NBRC 100826 / MSB8).